A 156-amino-acid polypeptide reads, in one-letter code: Small ribosomal subunit protein uS7 (156 aa).

This sequence belongs to the universal ribosomal protein uS7 family. Part of the 30S ribosomal subunit. Contacts proteins S9 and S11.

Its function is as follows. One of the primary rRNA binding proteins, it binds directly to 16S rRNA where it nucleates assembly of the head domain of the 30S subunit. Is located at the subunit interface close to the decoding center, probably blocks exit of the E-site tRNA. This chain is Small ribosomal subunit protein uS7, found in Desulfitobacterium hafniense (strain Y51).